The sequence spans 909 residues: Protein translocase subunit SecA (909 aa).

ATP contacts are provided by residues Gln-85, 103–107, and Asp-512; that span reads GEGKT. The interval 866 to 899 is disordered; that stretch reads HETSATGGEEEINKPVVKGKKIGRNDPCPCGSGK. Residues Cys-893, Cys-895, Cys-904, and Cys-905 each coordinate Zn(2+).

The protein belongs to the SecA family. In terms of assembly, monomer and homodimer. Part of the essential Sec protein translocation apparatus which comprises SecA, SecYEG and auxiliary proteins SecDF. Other proteins may also be involved. Zn(2+) is required as a cofactor.

The protein localises to the cell membrane. Its subcellular location is the cytoplasm. It carries out the reaction ATP + H2O + cellular proteinSide 1 = ADP + phosphate + cellular proteinSide 2.. In terms of biological role, part of the Sec protein translocase complex. Interacts with the SecYEG preprotein conducting channel. Has a central role in coupling the hydrolysis of ATP to the transfer of proteins into and across the cell membrane, serving as an ATP-driven molecular motor driving the stepwise translocation of polypeptide chains across the membrane. The sequence is that of Protein translocase subunit SecA from Finegoldia magna (strain ATCC 29328 / DSM 20472 / WAL 2508) (Peptostreptococcus magnus).